Reading from the N-terminus, the 2876-residue chain is Nipped-B-like protein B (2876 aa).

Polar residues-rich tracts occupy residues 124–142 (PQNSMHGSPASNYQQTTIT) and 149–167 (YVQTQAGSGSRYMPQQNSP). Disordered regions lie at residues 124–197 (PQNS…PIQQ), 246–367 (NDEG…SDAE), 439–494 (RESA…AGNK), and 525–1017 (EGPV…FPNY). Positions 276–290 (GPRPPLILQSPPPYT) are enriched in pro residues. Basic and acidic residues predominate over residues 439-457 (RESAIERERCSKEVQDKDK). A compositionally biased stretch (low complexity) spans 471–480 (PGAAGTAGAS). Over residues 481 to 490 (GTPGVGGGCN) the composition is skewed to gly residues. Basic and acidic residues-rich tracts occupy residues 556–577 (SKTDGEVQRTVDGRPEVIKQRV), 586–955 (VDGR…EQRS), and 962–1005 (VKQE…HKPQ). Positions 1068–1081 (NKGAKPVVVLKKLS) match the PxVxL motif motif. Disordered regions lie at residues 1088-1229 (MISN…EPKL) and 1724-1747 (TEKAMKSQRDDDSSDGPHHAKDVE). Low complexity predominate over residues 1090 to 1100 (SNSRSSKSSRS). Composition is skewed to basic and acidic residues over residues 1104-1119 (RFRETDSRLPLCERVK) and 1156-1183 (KDRDKTWEYEEKDRRGSGDHRRSFDSRR). Residues 1212 to 1223 (KLKKKEKQKKRK) show a composition bias toward basic residues. 5 HEAT repeats span residues 1803 to 1841 (AQSFDIYLTQILRVLGESAIAVRTKAMKCLSEVVAVDPS), 1879 to 1917 (PQLTEQYYDMLIERILDTGISVRKRVIKILRDICLEQPT), 1981 to 2020 (YDWFEQLLQNLLKSEEDASYKPARKACAQLVDSLVEHILK), 2203 to 2241 (VVIKDKVLELLLYFTKNDDEEVQTKAIIGLGFLFIQDPG), and 2349 to 2387 (LIHPVQCVPYLIAMGTDSEPTMRNKADQQLVEIDKKYTG). Disordered regions lie at residues 2516-2590 (EVVK…DSDL) and 2728-2774 (ALLG…GHRN). A compositionally biased stretch (basic residues) spans 2519-2537 (KKKKKKKKKKKQKQKRGKK). Residues 2548 to 2563 (RSSSSSSSSSSSSSDS) are compositionally biased toward low complexity. Positions 2762–2774 (RTGDSAEASGHRN) are enriched in basic and acidic residues.

Belongs to the SCC2/Nipped-B family.

It is found in the nucleus. Functionally, may play a structural role in chromatin. Involved in sister chromatid cohesion, possibly by facilitating the cohesin complex loading. Transcription factor, which may promote cortical neuron migration during brain development by regulating the transcription of crucial genes in this process. The polypeptide is Nipped-B-like protein B (nipblb) (Danio rerio (Zebrafish)).